The chain runs to 145 residues: D-aminoacyl-tRNA deacylase (145 aa).

Positions 137-138 match the Gly-cisPro motif, important for rejection of L-amino acids motif; sequence GP.

The protein belongs to the DTD family. As to quaternary structure, homodimer.

It localises to the cytoplasm. It catalyses the reaction glycyl-tRNA(Ala) + H2O = tRNA(Ala) + glycine + H(+). It carries out the reaction a D-aminoacyl-tRNA + H2O = a tRNA + a D-alpha-amino acid + H(+). In terms of biological role, an aminoacyl-tRNA editing enzyme that deacylates mischarged D-aminoacyl-tRNAs. Also deacylates mischarged glycyl-tRNA(Ala), protecting cells against glycine mischarging by AlaRS. Acts via tRNA-based rather than protein-based catalysis; rejects L-amino acids rather than detecting D-amino acids in the active site. By recycling D-aminoacyl-tRNA to D-amino acids and free tRNA molecules, this enzyme counteracts the toxicity associated with the formation of D-aminoacyl-tRNA entities in vivo and helps enforce protein L-homochirality. The sequence is that of D-aminoacyl-tRNA deacylase from Francisella tularensis subsp. holarctica (strain FTNF002-00 / FTA).